A 1164-amino-acid polypeptide reads, in one-letter code: Phytochrome D (1164 aa).

The interval 1-55 (MVSGGGSKTSGGEAASSGHRRSRHTSAAEQAQSSANKALRSQNQQPQNHGGGTES) is disordered. Over residues 25–55 (TSAAEQAQSSANKALRSQNQQPQNHGGGTES) the composition is skewed to polar residues. The 183-residue stretch at 255–437 (DIKLLCDTVV…AFGLQLNMEL (183 aa)) folds into the GAF domain. Cysteine 360 serves as a coordination point for phytochromobilin. 2 PAS domains span residues 656-727 (VARE…LKGD) and 790-861 (DYKA…MIVL). One can recognise a Histidine kinase domain in the interval 938–1157 (YIFQVIKNPL…LIVIELPVPL (220 aa)).

Belongs to the phytochrome family. As to quaternary structure, homodimer. Post-translationally, contains one covalently linked phytochromobilin chromophore.

Its function is as follows. Regulatory photoreceptor which exists in two forms that are reversibly interconvertible by light: the Pr form that absorbs maximally in the red region of the spectrum and the Pfr form that absorbs maximally in the far-red region. Photoconversion of Pr to Pfr induces an array of morphogenic responses, whereas reconversion of Pfr to Pr cancels the induction of those responses. Pfr controls the expression of a number of nuclear genes including those encoding the small subunit of ribulose-bisphosphate carboxylase, chlorophyll A/B binding protein, protochlorophyllide reductase, rRNA, etc. It also controls the expression of its own gene(s) in a negative feedback fashion. The polypeptide is Phytochrome D (PHYD) (Arabidopsis thaliana (Mouse-ear cress)).